Consider the following 346-residue polypeptide: D-alanine--D-alanine ligase (346 aa).

Positions 133 to 327 (KLYAKSVGVK…ALADQISLEK (195 aa)) constitute an ATP-grasp domain. An ATP-binding site is contributed by 159–211 (LSFPCIIKPARLGSSIGISIVKDEKDLEYAKDVGFEFDNDLVVEEFKNNIKEY). Mg(2+) contacts are provided by D284, E296, and N298.

Belongs to the D-alanine--D-alanine ligase family. Mg(2+) is required as a cofactor. Requires Mn(2+) as cofactor.

The protein localises to the cytoplasm. The catalysed reaction is 2 D-alanine + ATP = D-alanyl-D-alanine + ADP + phosphate + H(+). Its pathway is cell wall biogenesis; peptidoglycan biosynthesis. Its function is as follows. Cell wall formation. The protein is D-alanine--D-alanine ligase of Campylobacter jejuni subsp. jejuni serotype O:6 (strain 81116 / NCTC 11828).